The sequence spans 610 residues: UvrABC system protein C (610 aa).

In terms of domain architecture, GIY-YIG spans 16 to 94 (SQPGVYRMYD…IKLYQPRYNV (79 aa)). A UVR domain is found at 204-239 (DQVLTQLIARMEKASQDLAFEEAARIRDQIQAVRRV).

Belongs to the UvrC family. Interacts with UvrB in an incision complex.

The protein resides in the cytoplasm. In terms of biological role, the UvrABC repair system catalyzes the recognition and processing of DNA lesions. UvrC both incises the 5' and 3' sides of the lesion. The N-terminal half is responsible for the 3' incision and the C-terminal half is responsible for the 5' incision. This Salmonella paratyphi B (strain ATCC BAA-1250 / SPB7) protein is UvrABC system protein C.